The chain runs to 310 residues: Pseudouridine-5'-phosphate glycosidase (310 aa).

The active-site Proton donor is E26. Substrate is bound by residues K87 and V107. Mn(2+) is bound at residue D139. Position 141–143 (141–143) interacts with substrate; sequence SAD. The active-site Nucleophile is K160.

This sequence belongs to the pseudouridine-5'-phosphate glycosidase family. As to quaternary structure, homotrimer. Mn(2+) is required as a cofactor.

The enzyme catalyses D-ribose 5-phosphate + uracil = psi-UMP + H2O. In terms of biological role, catalyzes the reversible cleavage of pseudouridine 5'-phosphate (PsiMP) to ribose 5-phosphate and uracil. Functions biologically in the cleavage direction, as part of a pseudouridine degradation pathway. In Roseobacter denitrificans (strain ATCC 33942 / OCh 114) (Erythrobacter sp. (strain OCh 114)), this protein is Pseudouridine-5'-phosphate glycosidase.